We begin with the raw amino-acid sequence, 483 residues long: SWI/SNF-related matrix-associated actin-dependent regulator of chromatin subfamily D member 3 (483 aa).

N-acetylalanine is present on Ala2. Positions 26–102 are disordered; it reads VRPGMPSGAR…ARSRSAKRRK (77 aa). Over residues 78–87 the composition is skewed to low complexity; the sequence is QSQAQSQGQP. A Phosphoserine modification is found at Ser178. The SWIB/MDM2 domain occupies 258–335; that stretch reads YQPPQFKLDP…PQRLTALLLP (78 aa).

The protein belongs to the SMARCD family. As to quaternary structure, component of the multiprotein chromatin-remodeling complexes SWI/SNF: SWI/SNF-A (BAF), SWI/SNF-B (PBAF) and related complexes. The canonical complex contains a catalytic subunit (either SMARCA4/BRG1/BAF190A or SMARCA2/BRM/BAF190B) and at least SMARCE1, ACTL6A/BAF53, SMARCC1/BAF155, SMARCC2/BAF170, and SMARCB1/SNF5/BAF47. Other subunits specific to each of the complexes may also be present permitting several possible combinations developmentally and tissue specific. Component of the BAF complex, which includes at least actin (ACTB), ARID1A/BAF250A, ARID1B/BAF250B, SMARCA2/BRM, SMARCA4/BRG1/BAF190A, ACTL6A/BAF53, ACTL6B/BAF53B, SMARCE1/BAF57, SMARCC1/BAF155, SMARCC2/BAF170, SMARCB1/SNF5/INI1, and one or more SMARCD1/BAF60A, SMARCD2/BAF60B, or SMARCD3/BAF60C. In muscle cells, the BAF complex also contains DPF3. Component of neural progenitors-specific chromatin remodeling complex (npBAF complex) composed of at least, ARID1A/BAF250A or ARID1B/BAF250B, SMARCD1/BAF60A, SMARCD3/BAF60C, SMARCA2/BRM/BAF190B, SMARCA4/BRG1/BAF190A, SMARCB1/BAF47, SMARCC1/BAF155, SMARCE1/BAF57, SMARCC2/BAF170, PHF10/BAF45A, ACTL6A/BAF53A and actin. Component of neuron-specific chromatin remodeling complex (nBAF complex) composed of at least, ARID1A/BAF250A or ARID1B/BAF250B, SMARCD1/BAF60A, SMARCD3/BAF60C, SMARCA2/BRM/BAF190B, SMARCA4/BRG1/BAF190A, SMARCB1/BAF47, SMARCC1/BAF155, SMARCE1/BAF57, SMARCC2/BAF170, DPF1/BAF45B, DPF3/BAF45C, ACTL6B/BAF53B and actin. May be a component of the SWI/SNF-B (PBAF) chromatin remodeling complex, at least composed of SMARCA4/BRG1, SMARCB1/BAF47/SNF5, ACTL6A/BAF53A or ACTL6B/BAF53B, SMARCE1/BAF57, SMARCD1/BAF60A, SMARCD2/BAF60B, perhaps SMARCD3/BAF60C, SMARCC1/BAF155, SMARCC2/BAF170, PBRM1/BAF180, ARID2/BAF200 and actin. Interacts with SMARCA4/BRG1/BAF190A. Component of SWI/SNF (GBAF) subcomplex, which includes at least BICRA or BICRAL (mutually exclusive), BRD9, SS18, SMARCA2/BRM, SMARCA4/BRG1/BAF190A, ACTL6A/BAF53, SMARCC1/BAF155, and SMARCD1/BAF60A. The precise distribution of the related SMARCD1, SMARCD2 and SMARCD3 proteins among these and other SWI/SNF nucleosome-remodeling complexes is not fully known. May allow recruitment of SWI/SNF containing complexes specifically to promoters where these factors are located. Also interacts with several nuclear receptors including PPARG/NR1C3, RXRA/NR1F1, ESR1, NR5A1, NR5A2/LRH1 and other transcriptional activators including the HLH protein SREBF1/SREBP1 and the homeobox protein PBX1. Interacts with PRDM1/BLIMP1. Isoform 2 and isoform 1 are expressed in brain, heart, kidney, placenta, prostate, salivary gland, spleen, testis, thyroid, trachea and uterus. Isoform 1 is also expressed in skeletal muscle and adipose tissue.

The protein resides in the nucleus. Its function is as follows. Involved in transcriptional activation and repression of select genes by chromatin remodeling (alteration of DNA-nucleosome topology). Component of SWI/SNF chromatin remodeling complexes that carry out key enzymatic activities, changing chromatin structure by altering DNA-histone contacts within a nucleosome in an ATP-dependent manner. Stimulates nuclear receptor mediated transcription. Belongs to the neural progenitors-specific chromatin remodeling complex (npBAF complex) and the neuron-specific chromatin remodeling complex (nBAF complex). During neural development a switch from a stem/progenitor to a postmitotic chromatin remodeling mechanism occurs as neurons exit the cell cycle and become committed to their adult state. The transition from proliferating neural stem/progenitor cells to postmitotic neurons requires a switch in subunit composition of the npBAF and nBAF complexes. As neural progenitors exit mitosis and differentiate into neurons, npBAF complexes which contain ACTL6A/BAF53A and PHF10/BAF45A, are exchanged for homologous alternative ACTL6B/BAF53B and DPF1/BAF45B or DPF3/BAF45C subunits in neuron-specific complexes (nBAF). The npBAF complex is essential for the self-renewal/proliferative capacity of the multipotent neural stem cells. The nBAF complex along with CREST plays a role regulating the activity of genes essential for dendrite growth. The polypeptide is SWI/SNF-related matrix-associated actin-dependent regulator of chromatin subfamily D member 3 (SMARCD3) (Homo sapiens (Human)).